Here is a 396-residue protein sequence, read N- to C-terminus: S-adenosylmethionine synthase (396 aa).

Residue H16 participates in ATP binding. D18 contacts Mg(2+). E44 is a K(+) binding site. The L-methionine site is built by E57 and Q100. A flexible loop region spans residues 100–110 (QSPDINQGVDR). ATP-binding positions include 165-167 (DAK), D240, 246-247 (RK), A263, and K267. D240 contacts L-methionine. K271 is an L-methionine binding site.

The protein belongs to the AdoMet synthase family. Homotetramer; dimer of dimers. Mg(2+) serves as cofactor. Requires K(+) as cofactor.

Its subcellular location is the cytoplasm. It carries out the reaction L-methionine + ATP + H2O = S-adenosyl-L-methionine + phosphate + diphosphate. Its pathway is amino-acid biosynthesis; S-adenosyl-L-methionine biosynthesis; S-adenosyl-L-methionine from L-methionine: step 1/1. In terms of biological role, catalyzes the formation of S-adenosylmethionine (AdoMet) from methionine and ATP. The overall synthetic reaction is composed of two sequential steps, AdoMet formation and the subsequent tripolyphosphate hydrolysis which occurs prior to release of AdoMet from the enzyme. This chain is S-adenosylmethionine synthase, found in Pseudomonas fluorescens (strain Pf0-1).